The chain runs to 152 residues: Protein IpgF (152 aa).

The N-terminal stretch at 1-17 is a signal peptide; the sequence is MSRFVFILLCFIPYLGR.

Belongs to the IagB/IpgF/P19 family.

This is Protein IpgF (ipgF) from Shigella sonnei.